Consider the following 145-residue polypeptide: uncharacterized protein (145 aa).

The next 3 helical transmembrane spans lie at 3–23 (VGIILGILSAMGFLVFLGIGG), 83–103 (YVIDVGYSILFLVTLTLYLVP), and 105–125 (LSLLVWVTFFGATVFMIMLWI).

Its subcellular location is the cell membrane. This is an uncharacterized protein from Methanocaldococcus jannaschii (strain ATCC 43067 / DSM 2661 / JAL-1 / JCM 10045 / NBRC 100440) (Methanococcus jannaschii).